We begin with the raw amino-acid sequence, 203 residues long: Auxin-responsive protein IAA4 (203 aa).

Residues 1 to 31 are disordered; sequence MEECKGGGMSPSSSMDSSTHPALSTTSSAAT. Residues 10–31 show a composition bias toward low complexity; sequence SPSSSMDSSTHPALSTTSSAAT. The EAR-like (transcriptional repression) motif lies at 40-44; that stretch reads LRLGL. Residues 108 to 202 form the PB1 domain; the sequence is TLFVKVYMEG…KKLRIARMDK (95 aa).

The protein belongs to the Aux/IAA family. As to quaternary structure, homodimers and heterodimers.

The protein resides in the nucleus. Functionally, aux/IAA proteins are short-lived transcriptional factors that function as repressors of early auxin response genes at low auxin concentrations. This Oryza sativa subsp. japonica (Rice) protein is Auxin-responsive protein IAA4 (IAA4).